Reading from the N-terminus, the 490-residue chain is UDP-N-acetylmuramate--L-alanine ligase (490 aa).

Glycine 126–threonine 132 is a binding site for ATP.

It belongs to the MurCDEF family.

The protein localises to the cytoplasm. It carries out the reaction UDP-N-acetyl-alpha-D-muramate + L-alanine + ATP = UDP-N-acetyl-alpha-D-muramoyl-L-alanine + ADP + phosphate + H(+). Its pathway is cell wall biogenesis; peptidoglycan biosynthesis. In terms of biological role, cell wall formation. In Baumannia cicadellinicola subsp. Homalodisca coagulata, this protein is UDP-N-acetylmuramate--L-alanine ligase.